Here is a 623-residue protein sequence, read N- to C-terminus: MVSKQQTMGFQTEVKQMLHLVVHSLYSNKEIFLRELISNASDALDKLRFLALSNGSLFENDSDLKISIQINEKLQTITISDNGIGLSWEEAVENLGTIAKSGTKEFISQLTGEQAKDSQLIGQFGVGFYSAFIVADKVTVKSRRAGLQPEDGIVWESKGDGEFTIGYEKKSTRGTEITLHLKPENDEFLSDWRIRGIISKYSDHICWPIVMKKLSEEGKESKEFETVNKATALWTLQKSEIGEEDYKQLYKHISHDYMDPLTWSHNHVEGKHEYITLLYIPAHAPFDLWQHEAKHGLKLYVKRVFIMDEATQFLPRYLRFIKGIVDASDLPLNISREILQDNKQVESIRAACTKRVLSMLEKMATNDKETYQKFWNEFGLVLKEGPIEDFANKEAIAKLLRFSTTASGSEKQEVSLEEYVSRMKEGQDKIYYITASSYNAAKNSPHLEIFRKKGIEVLLLSDKVDEWLVGYMNEFTGKKLQSISKGKVELGDDETSEQIKEQEKTLEPLIKHIKSVLNERVKDVLLTNRLTDSPACVVADEQDMGLEMQRILQAAGQQIPVSKPIFEINPEHALIKRLHDIQDDNQFELWVTMLFEQAVLAEGGQLDNPADFVNRVNRLLVSS.

The interval 1–336 (MVSKQQTMGF…ASDLPLNISR (336 aa)) is a; substrate-binding. Residues 337–550 (EILQDNKQVE…EQDMGLEMQR (214 aa)) form a b region. The tract at residues 551–623 (ILQAAGQQIP…NRVNRLLVSS (73 aa)) is c.

This sequence belongs to the heat shock protein 90 family. In terms of assembly, homodimer.

Its subcellular location is the cytoplasm. Functionally, molecular chaperone. Has ATPase activity. This chain is Chaperone protein HtpG, found in Legionella pneumophila (strain Lens).